We begin with the raw amino-acid sequence, 376 residues long: 26S proteasome non-ATPase regulatory subunit 13 (376 aa).

One can recognise a PCI domain in the interval 171–338 (SYYKDALRFL…KRVHMTWVQP (168 aa)). Lys298 bears the N6-acetyllysine mark.

The protein belongs to the proteasome subunit S11 family. Component of the 19S proteasome regulatory particle complex. The 26S proteasome consists of a 20S core particle (CP) and two 19S regulatory subunits (RP). The regulatory particle is made of a lid composed of 9 subunits including PSMD13, a base containing 6 ATPases and few additional components.

In terms of biological role, component of the 26S proteasome, a multiprotein complex involved in the ATP-dependent degradation of ubiquitinated proteins. This complex plays a key role in the maintenance of protein homeostasis by removing misfolded or damaged proteins, which could impair cellular functions, and by removing proteins whose functions are no longer required. Therefore, the proteasome participates in numerous cellular processes, including cell cycle progression, apoptosis, or DNA damage repair. The sequence is that of 26S proteasome non-ATPase regulatory subunit 13 (Psmd13) from Mus musculus (Mouse).